Consider the following 168-residue polypeptide: MQRVGSSFSTGQREPGENRVASRCPSVALAERNQVATLPVRLLRDEVQGNGCEQPSFQIKVDAQGFAPEDLVVRIDGQNLTVTGQRQHESNDPSRGRYRMEQSVHRQMQLPPTLDPAAMTCSLTPSGHLWLRGQNKCLPPPEAQTGQSQKPRRGGPKSSLQNESVKNP.

Residues 1-12 show a composition bias toward polar residues; the sequence is MQRVGSSFSTGQ. Disordered regions lie at residues 1–25, 83–104, and 129–168; these read MQRV…SRCP, TGQR…EQSV, and LWLR…VKNP. The 114-residue stretch at 38 to 151 folds into the sHSP domain; it reads LPVRLLRDEV…EAQTGQSQKP (114 aa). The segment covering 86-104 has biased composition (basic and acidic residues); that stretch reads RQHESNDPSRGRYRMEQSV. Polar residues predominate over residues 158–168; it reads SSLQNESVKNP.

This sequence belongs to the small heat shock protein (HSP20) family. Testis specific.

It localises to the cytoplasm. It is found in the nucleus. The sequence is that of Heat shock protein beta-9 (Hspb9) from Mus musculus (Mouse).